The primary structure comprises 411 residues: S-inosyl-L-homocysteine hydrolase (411 aa).

Substrate contacts are provided by aspartate 121 and glutamate 146. NAD(+) is bound at residue 147-149; that stretch reads TTT. Positions 176 and 180 each coordinate substrate. NAD(+) is bound by residues asparagine 181, 210 to 215, glutamate 233, asparagine 268, 289 to 291, and asparagine 335; these read GYGWCG and SGH.

Belongs to the adenosylhomocysteinase family. The cofactor is NAD(+).

Its subcellular location is the cytoplasm. The catalysed reaction is S-inosyl-L-homocysteine + H2O = L-homocysteine + inosine. Its pathway is amino-acid biosynthesis; S-adenosyl-L-methionine biosynthesis. Catalyzes the hydrolysis of S-inosyl-L-homocysteine (SIH) to L-homocysteine (Hcy) and inosine. Likely functions in a S-adenosyl-L-methionine (SAM) recycling pathway from S-adenosyl-L-homocysteine (SAH) produced from SAM-dependent methylation reactions. Can also catalyze the reverse reaction in vitro, i.e. the synthesis of SIH from Hcy and inosine. The sequence is that of S-inosyl-L-homocysteine hydrolase from Methanosarcina acetivorans (strain ATCC 35395 / DSM 2834 / JCM 12185 / C2A).